A 983-amino-acid polypeptide reads, in one-letter code: Inner tegument protein (983 aa).

Residues 474-983 (LNVNTHFAVQ…TSVSLPPASP (510 aa)) form an interaction with large tegument protein region. Residues 901 to 932 (APWESAPQPPRLRMTPDTDHEESTAGATSVPE) form a disordered region. The segment covering 914-923 (MTPDTDHEES) has biased composition (basic and acidic residues).

This sequence belongs to the herpesviridae inner tegument protein family. As to quaternary structure, interacts (via C-terminus) with the large tegument protein/LTP (via N-terminus).

It is found in the virion tegument. It localises to the host cytoplasm. The protein localises to the host nucleus. The protein resides in the host Golgi apparatus. Its subcellular location is the host trans-Golgi network. In terms of biological role, plays an essential role in cytoplasmic secondary envelopment during viral egress. Interacts with the capsid via the large tegument protein/LTP and participates in its transport to the host trans-Golgi network (TGN) where secondary envelopment occurs. Modulates tegumentation and capsid accumulation at the viral assembly complex. The protein is Inner tegument protein (UL47) of Homo sapiens (Human).